We begin with the raw amino-acid sequence, 299 residues long: tRNA dimethylallyltransferase (299 aa).

Glycine 11–threonine 18 provides a ligand contact to ATP. Threonine 13 to threonine 18 lines the substrate pocket. Residues aspartate 36–glutamine 39 are interaction with substrate tRNA.

This sequence belongs to the IPP transferase family. As to quaternary structure, monomer. The cofactor is Mg(2+).

The enzyme catalyses adenosine(37) in tRNA + dimethylallyl diphosphate = N(6)-dimethylallyladenosine(37) in tRNA + diphosphate. In terms of biological role, catalyzes the transfer of a dimethylallyl group onto the adenine at position 37 in tRNAs that read codons beginning with uridine, leading to the formation of N6-(dimethylallyl)adenosine (i(6)A). This is tRNA dimethylallyltransferase from Streptococcus pyogenes serotype M4 (strain MGAS10750).